Reading from the N-terminus, the 1257-residue chain is Liprin-alpha-2 (1257 aa).

The tract at residues 1-29 (MMCEVMPTINEDTPMSQRGSQSSGSDSDS) is disordered. The segment covering 16–26 (SQRGSQSSGSD) has biased composition (low complexity). 2 coiled-coil regions span residues 29 to 154 (SHFE…SLRM) and 185 to 235 (KALD…SSEG). At Ser236 the chain carries Phosphoserine. Position 237 is a phosphothreonine (Thr237). Ser239 carries the post-translational modification Phosphoserine. Coiled coils occupy residues 264–541 (TDDT…SLIE) and 643–695 (HSDA…GLNL). The tract at residues 439–463 (GQLEEKNQELQRARQREKMNEEHNK) is disordered. Ser687 and Ser689 each carry phosphoserine. Over residues 709–725 (TASSLASSSPPSGHSTP) the composition is skewed to low complexity. Disordered stretches follow at residues 709–738 (TASS…EMDR) and 759–834 (EEDG…KSSI). Residues 787 to 802 (TLPSSYHNDARSSLSA) show a composition bias toward polar residues. A phosphoserine mark is found at Ser817 and Ser820. SAM domains lie at 898–964 (WDGP…MVSL), 1020–1084 (NHEW…LKRL), and 1108–1177 (WSND…LLAL). Residues 1081 to 1107 (LKRLNYDRKELERRREASQHEIKDVLV) adopt a coiled-coil conformation.

Belongs to the liprin family. Liprin-alpha subfamily. In terms of assembly, forms homodimers and heterodimers with liprins-alpha and liprins-beta. Interacts with the second PTPase domain of PTPRD, PTPRF and PTPRS. Interacts with KIF1A; the interaction decreases in presence of calcium.

The protein localises to the cytoplasm. It localises to the cell surface. The protein resides in the cell projection. Its subcellular location is the dendritic spine. Alters PTPRF cellular localization and induces PTPRF clustering. May regulate the disassembly of focal adhesions. May localize receptor-like tyrosine phosphatases type 2A at specific sites on the plasma membrane, possibly regulating their interaction with the extracellular environment and their association with substrates. In neuronal cells, is a scaffolding protein in the dendritic spines which acts as immobile postsynaptic post able to recruit KIF1A-driven dense core vesicles to dendritic spines. The polypeptide is Liprin-alpha-2 (Ppfia2) (Mus musculus (Mouse)).